Consider the following 245-residue polypeptide: Acetylglutamate kinase (245 aa).

Residues 41-42 (GG), Arg-63, and Asn-156 contribute to the substrate site.

The protein belongs to the acetylglutamate kinase family. ArgB subfamily.

It localises to the cytoplasm. It catalyses the reaction N-acetyl-L-glutamate + ATP = N-acetyl-L-glutamyl 5-phosphate + ADP. The protein operates within amino-acid biosynthesis; L-arginine biosynthesis; N(2)-acetyl-L-ornithine from L-glutamate: step 2/4. Its function is as follows. Catalyzes the ATP-dependent phosphorylation of N-acetyl-L-glutamate. In Leuconostoc citreum (strain KM20), this protein is Acetylglutamate kinase.